A 555-amino-acid chain; its full sequence is Disabled homolog 1 (555 aa).

The interval 1 to 26 (MSTETELQVAVKTSAKKDSRKKGQDR) is disordered. The segment covering 15–26 (AKKDSRKKGQDR) has biased composition (basic and acidic residues). Residues 36–189 (KGEGVRYKAK…CEQAVYQTIL (154 aa)) form the PID domain. A phosphotyrosine mark is found at tyrosine 198, tyrosine 220, and tyrosine 232. Disordered regions lie at residues 384 to 410 (LTPL…RQKM), 418 to 437 (FQMA…PSLT), and 468 to 555 (NLTP…QAGS). The span at 391-403 (PGTSDSTRPSPQT) shows a compositional bias: polar residues. Low complexity-rich tracts occupy residues 470–479 (TPVTSTTPST) and 487–501 (PRQS…SHAS). The residue at position 491 (serine 491) is a Phosphoserine; by CDK5. Residues 504-513 (TTDDIFEEGF) show a composition bias toward acidic residues.

As to quaternary structure, associates with the SH2 domains of SRC, FYN and ABL. Interacts (phosphorylated on tyrosine residues) with CRK and CRKL (via respective SH2 domain). Interacts with DAB2IP, SIAH1, LRP8 and VLDLR. Interacts with LRP1. Interacts with APLP1 (via NPXY motif). Interacts with DAB2IP. Interacts with ZSWIM8. In terms of processing, phosphorylated by FYN on Tyr-198 and Tyr-220 upon reelin induction in embryonic neurons. Also phosphorylated on Ser-491 independently of reelin signaling. Ubiquitinated by various cullin-5-RING E3 ubiquitin-protein ligase complexes (ECS complexes) following ligand-binding and phosphorylation, leading to its degradation. Ubiquitinated by the ECS(SOCS7) complex in the cortical plate of the developing cerebral cortex following ligand-binding and phosphorylation by FYN, leading to its degradation by the proteasome. Recognized by ZSWIM8 through a disorder targets misorder mechanism that eliminates misfolded DAB1 via ubiquitination and proteasomal degradation.

The protein localises to the cytoplasm. Signaling adapter of the reelin-mediated signaling pathway, which regulates the migration and differentiation of postmitotic neurons during brain development. Mediates intracellular transduction of Reelin signaling following reelin (RELN)-binding to its receptor: acts by docking proteins through its phosphotyrosine residues and PID domain. This Macaca fascicularis (Crab-eating macaque) protein is Disabled homolog 1 (DAB1).